Consider the following 145-residue polypeptide: D-aminoacyl-tRNA deacylase (145 aa).

The Gly-cisPro motif, important for rejection of L-amino acids signature appears at 137 to 138 (GP).

It belongs to the DTD family. Homodimer.

Its subcellular location is the cytoplasm. It catalyses the reaction glycyl-tRNA(Ala) + H2O = tRNA(Ala) + glycine + H(+). It carries out the reaction a D-aminoacyl-tRNA + H2O = a tRNA + a D-alpha-amino acid + H(+). Functionally, an aminoacyl-tRNA editing enzyme that deacylates mischarged D-aminoacyl-tRNAs. Also deacylates mischarged glycyl-tRNA(Ala), protecting cells against glycine mischarging by AlaRS. Acts via tRNA-based rather than protein-based catalysis; rejects L-amino acids rather than detecting D-amino acids in the active site. By recycling D-aminoacyl-tRNA to D-amino acids and free tRNA molecules, this enzyme counteracts the toxicity associated with the formation of D-aminoacyl-tRNA entities in vivo and helps enforce protein L-homochirality. The protein is D-aminoacyl-tRNA deacylase of Dinoroseobacter shibae (strain DSM 16493 / NCIMB 14021 / DFL 12).